Consider the following 612-residue polypeptide: Elongation factor 4 (612 aa).

One can recognise a tr-type G domain in the interval 11 to 193; it reads KHIRNFSIVA…EIVKKVPAPN (183 aa). GTP is bound by residues 23-28 and 140-143; these read DHGKST and NKID.

This sequence belongs to the TRAFAC class translation factor GTPase superfamily. Classic translation factor GTPase family. LepA subfamily.

Its subcellular location is the cell membrane. The enzyme catalyses GTP + H2O = GDP + phosphate + H(+). Required for accurate and efficient protein synthesis under certain stress conditions. May act as a fidelity factor of the translation reaction, by catalyzing a one-codon backward translocation of tRNAs on improperly translocated ribosomes. Back-translocation proceeds from a post-translocation (POST) complex to a pre-translocation (PRE) complex, thus giving elongation factor G a second chance to translocate the tRNAs correctly. Binds to ribosomes in a GTP-dependent manner. This is Elongation factor 4 from Lactobacillus gasseri (strain ATCC 33323 / DSM 20243 / BCRC 14619 / CIP 102991 / JCM 1131 / KCTC 3163 / NCIMB 11718 / NCTC 13722 / AM63).